We begin with the raw amino-acid sequence, 196 residues long: MSRYRGPRLKKIRRLGALPGLTRKTPKSGSNQKKKFHSGKKEQYRIRLQEKQKLRFHYGLTERQLLRYVHIAGKAKRSTGQVLLQLLEMRLDNILFRLGMASTIPGARQLVNHRHILVNGRIVDIPSFRCKPRDIITTKDNQRSKRLVQNSIASSDPGKLPKHLTVDTLQYKGLVKKILDRKWVGLKVNELLVVEY.

The tract at residues 15-43 is disordered; the sequence is LGALPGLTRKTPKSGSNQKKKFHSGKKEQ. Residues 89–150 enclose the S4 RNA-binding domain; that stretch reads MRLDNILFRL…NQRSKRLVQN (62 aa).

This sequence belongs to the universal ribosomal protein uS4 family. Part of the 30S ribosomal subunit. Contacts protein S5. The interaction surface between S4 and S5 is involved in control of translational fidelity.

The protein resides in the plastid. It localises to the chloroplast. Its function is as follows. One of the primary rRNA binding proteins, it binds directly to 16S rRNA where it nucleates assembly of the body of the 30S subunit. With S5 and S12 plays an important role in translational accuracy. This Melinis repens (Red Natal grass) protein is Small ribosomal subunit protein uS4c (rps4).